We begin with the raw amino-acid sequence, 416 residues long: UDP-N-acetylglucosamine 1-carboxyvinyltransferase (416 aa).

Residue 22 to 23 (KN) coordinates phosphoenolpyruvate. R92 lines the UDP-N-acetyl-alpha-D-glucosamine pocket. Catalysis depends on C116, which acts as the Proton donor. At C116 the chain carries 2-(S-cysteinyl)pyruvic acid O-phosphothioketal. UDP-N-acetyl-alpha-D-glucosamine contacts are provided by residues 121-125 (RPVDQ), D304, and I326.

This sequence belongs to the EPSP synthase family. MurA subfamily.

The protein resides in the cytoplasm. It carries out the reaction phosphoenolpyruvate + UDP-N-acetyl-alpha-D-glucosamine = UDP-N-acetyl-3-O-(1-carboxyvinyl)-alpha-D-glucosamine + phosphate. Its pathway is cell wall biogenesis; peptidoglycan biosynthesis. In terms of biological role, cell wall formation. Adds enolpyruvyl to UDP-N-acetylglucosamine. The protein is UDP-N-acetylglucosamine 1-carboxyvinyltransferase of Janthinobacterium sp. (strain Marseille) (Minibacterium massiliensis).